We begin with the raw amino-acid sequence, 1041 residues long: RAS protein activator like-3 (1041 aa).

Residues 1 to 59 (MKPECGQTMFRTFWSRSRDSSAMDPPLQSEEDSQTQPSLPSPLTSYRWHTGGSGEKAAG) form a disordered region. The span at 34–44 (QTQPSLPSPLT) shows a compositional bias: polar residues. Residues serine 41, serine 74, serine 187, serine 189, serine 190, serine 193, serine 239, serine 252, serine 256, and serine 259 each carry the phosphoserine modification. Residues 218–243 (SNQVHNVRKLLKRLKEKKRAKSELGA) are a coiled coil. The region spanning 220 to 321 (QVHNVRKLLK…WIEDLRRQFQ (102 aa)) is the PH domain. The interval 234 to 256 (KKRAKSELGAYTPRDGPPSALGS) is disordered. At threonine 262 the chain carries Phosphothreonine. The region spanning 312 to 430 (WIEDLRRQFQ…APAAGLERWF (119 aa)) is the C2 domain. The region spanning 500-708 (GRAQALVTDL…PAMQHFLDQV (209 aa)) is the Ras-GAP domain. The segment at 790–910 (GEKPGFLAPR…PGDRYQTTGT (121 aa)) is disordered. 2 positions are modified to phosphoserine: serine 813 and serine 816. Residues 850 to 866 (RPTHRRPSAGSKPRPKG) show a composition bias toward basic residues. A coiled-coil region spans residues 931–1013 (QKALSLLVES…LRDSLQSLQL (83 aa)). Residues 1016–1041 (KTPGSRSQPLPLKAPCVNGADLSMGT) form a disordered region.

As to expression, predominantly expressed in hematopoietic tissues.

Its subcellular location is the cytoplasm. It is found in the cell cortex. Its function is as follows. Functions as a Ras GTPase-activating protein. Plays an important role in the expansion and functions of natural killer T (NKT) cells in the liver by negatively regulating RAS activity and the down-stream ERK signaling pathway. This chain is RAS protein activator like-3 (Rasal3), found in Mus musculus (Mouse).